The sequence spans 504 residues: ATP-dependent rRNA helicase RRP3 (504 aa).

Residues 34–62 (ASASSAASTKESLPVSETISISTSETPVS) show a composition bias toward low complexity. The disordered stretch occupies residues 34–99 (ASASSAASTK…SSSSPPSVQS (66 aa)). Over residues 68-79 (SNKEDLSTKKDQ) the composition is skewed to basic and acidic residues. Positions 80–99 (SSASSSSSTSSSSSPPSVQS) are enriched in low complexity. The Q motif motif lies at 98-126 (QSFTEFDLVPELLESIQSLKYTQPTPIQA). Residues 129–301 (IPHALQGKDI…RSLNSPVQVE (173 aa)) enclose the Helicase ATP-binding domain. 142–149 (AETGSGKT) serves as a coordination point for ATP. Positions 248–251 (DEVD) match the DEAD box motif. A Helicase C-terminal domain is found at 327-471 (RLIQIVNLDS…DLPLDEMQGL (145 aa)).

Belongs to the DEAD box helicase family. DDX47/RRP3 subfamily. Interacts with the SSU processome.

Its subcellular location is the nucleus. It carries out the reaction ATP + H2O = ADP + phosphate + H(+). In terms of biological role, ATP-dependent rRNA helicase required for pre-ribosomal RNA processing. Involved in the maturation of the 35S-pre-rRNA and to its cleavage to mature 18S rRNA. The sequence is that of ATP-dependent rRNA helicase RRP3 from Lodderomyces elongisporus (strain ATCC 11503 / CBS 2605 / JCM 1781 / NBRC 1676 / NRRL YB-4239) (Yeast).